We begin with the raw amino-acid sequence, 747 residues long: Rho GTPase-activating protein 24 (747 aa).

Disordered stretches follow at residues 1-20 and 327-475; these read MEER…KNTK and FPKD…GTHS. The region spanning 17–123 is the PH domain; that stretch reads KNTKCGWLRK…WVKSIRRVIW (107 aa). The region spanning 133-327 is the Rho-GAP domain; it reads QKLEDTVRYE…VMISKHDRLF (195 aa). Polar residues-rich tracts occupy residues 334–346 and 355–367; these read QSKP…SNNN and GQLQ…NTKE. Phosphoserine occurs at positions 368, 390, 395, 397, 401, 412, 414, and 436. The segment covering 368-380 has biased composition (basic and acidic residues); that stretch reads SPVRRCSWDKPES. Residues 381 to 404 show a composition bias toward polar residues; that stretch reads PQRSSVDNGSPTALSGSKTNSPRN. The span at 431 to 475 shows a compositional bias: polar residues; that stretch reads IVTNGSFSSSNAEGVEKPQTTPNGSLQARRTSSLKSSGTKMGTHS. Phosphothreonine is present on T451. Position 494 is a phosphoserine (S494). A disordered region spans residues 581 to 639; sequence DFYVGNFEDPVLDGPPQDDLSHPGDYENKSDRRSVGGRSSRATSSSDNSETFVGNTSSN. A compositionally biased stretch (basic and acidic residues) spans 599-614; that stretch reads DLSHPGDYENKSDRRS. Low complexity predominate over residues 616–629; it reads GGRSSRATSSSDNS. The span at 630–639 shows a compositional bias: polar residues; that stretch reads ETFVGNTSSN. A coiled-coil region spans residues 648–728; the sequence is SSLKQEMTKQ…KEMEQFFSTF (81 aa).

As to quaternary structure, interacts with FLNA. Post-translationally, phosphorylated by ROCK, leading to activate the RacGAP activity.

Its subcellular location is the cytoplasm. The protein localises to the cytoskeleton. It is found in the cell junction. The protein resides in the adherens junction. It localises to the focal adhesion. Its subcellular location is the cell projection. Rho GTPase-activating protein involved in cell polarity, cell morphology and cytoskeletal organization. Acts as a GTPase activator for the Rac-type GTPase by converting it to an inactive GDP-bound state. Controls actin remodeling by inactivating Rac downstream of Rho leading to suppress leading edge protrusion and promotes cell retraction to achieve cellular polarity. Able to suppress RAC1 and CDC42 activity in vitro. Overexpression induces cell rounding with partial or complete disruption of actin stress fibers and formation of membrane ruffles, lamellipodia, and filopodia. Isoform 2 is a vascular cell-specific GAP involved in modulation of angiogenesis. The chain is Rho GTPase-activating protein 24 (Arhgap24) from Mus musculus (Mouse).